Here is a 272-residue protein sequence, read N- to C-terminus: Hydroxyethylthiazole kinase (272 aa).

Met-45 provides a ligand contact to substrate. Residues Arg-121 and Thr-168 each contribute to the ATP site. A substrate-binding site is contributed by Gly-195.

This sequence belongs to the Thz kinase family. Homotrimer. Mg(2+) serves as cofactor.

It catalyses the reaction 5-(2-hydroxyethyl)-4-methylthiazole + ATP = 4-methyl-5-(2-phosphooxyethyl)-thiazole + ADP + H(+). It functions in the pathway cofactor biosynthesis; thiamine diphosphate biosynthesis; 4-methyl-5-(2-phosphoethyl)-thiazole from 5-(2-hydroxyethyl)-4-methylthiazole: step 1/1. Functionally, catalyzes the phosphorylation of the hydroxyl group of 4-methyl-5-beta-hydroxyethylthiazole (THZ). The sequence is that of Hydroxyethylthiazole kinase from Bacillus subtilis (strain 168).